The sequence spans 601 residues: Protein NRT1/ PTR FAMILY 4.4 (601 aa).

Transmembrane regions (helical) follow at residues 44–64 (AALFVLGFQAFEMMAIAAVGN) and 82–102 (ANLVTNFIGTVFLLSLLGGFL). The residue at position 112 (Thr112) is a Phosphothreonine. Helical transmembrane passes span 113 to 133 (MLVFGVIEISGFILLSVQAHL), 160 to 180 (TLYTALCLVALGSGCLKPNII), 198 to 218 (FFNAAYFAFSMGQLIALTLLV), 228 to 248 (VGFGVSAAVMAAGMISLVAGT), 337 to 357 (ILLSVIPIFACTIIFNTILAQ), 386 to 406 (AIPYIILIFFVPLYETFFVPL), 420 to 440 (LQRIGTGLFLATFSMVAAALV), 453 to 473 (VMLSIFWIAPQFLIFGLSEMF), 493 to 513 (FLTAMTYCSYSFGFYLSSVLV), and 544 to 564 (HFYWLLASLSFINFFNYLFWS).

The protein belongs to the major facilitator superfamily. Proton-dependent oligopeptide transporter (POT/PTR) (TC 2.A.17) family. In terms of tissue distribution, expressed in shoots, roots and stems.

Its subcellular location is the membrane. This is Protein NRT1/ PTR FAMILY 4.4 (NPF4.4) from Arabidopsis thaliana (Mouse-ear cress).